Consider the following 210-residue polypeptide: MPDTVCRPPRLILASSSRYRRALLERLGIPFDVVSPDLDETPLAGETPAATALRLAGAKARAVAATIDAPDGVLVIGSDQVATFDGHQIGKPGTHERALAQLVSMQGREVEFHSALCLYDSRTDNAQVEDIVTHVRFRSLPEAELDAYLRAETPYDVAGSAKSEGLGIALLDAIDSDDPTALVGLPLIALTRMLRAADYPLFATTRGDRA.

D79 acts as the Proton acceptor in catalysis.

This sequence belongs to the Maf family. YceF subfamily. The cofactor is a divalent metal cation.

It is found in the cytoplasm. It carries out the reaction N(7)-methyl-GTP + H2O = N(7)-methyl-GMP + diphosphate + H(+). Its function is as follows. Nucleoside triphosphate pyrophosphatase that hydrolyzes 7-methyl-GTP (m(7)GTP). May have a dual role in cell division arrest and in preventing the incorporation of modified nucleotides into cellular nucleic acids. This chain is 7-methyl-GTP pyrophosphatase, found in Burkholderia orbicola (strain AU 1054).